We begin with the raw amino-acid sequence, 355 residues long: MRVADFSFELPESLIAHYPQAERSGCRLLSLDGPTGDLTHGVFTDLLEKLNPGDLLVFNNTRVIPARLFGRKVSGGKLEVLVERVLDDHRILAHVRASKAPKPGTELLLGDDESVKATMVARHDALFELHFDDSRDVLSILNDIGHMPLPPYIDRPDEDADRELYQTVYSQRPGAVAAPTAGLHFDEPMLAALRAKGIEMAFVTLHVGAGTFQPVRVDTIEDHIMHAEYAEVPQDVVDAVLACKARGNRVIAVGTTSVRSLESAAQASQDAPIAPFFGDTKIFIYPGYHYRIIDALVTNFHLPESTLIMLVSAFAGYQNTMSAYREAVAEQYRFFSYGDAMFITHSPMAEQEKVG.

It belongs to the QueA family. In terms of assembly, monomer.

It is found in the cytoplasm. It catalyses the reaction 7-aminomethyl-7-carbaguanosine(34) in tRNA + S-adenosyl-L-methionine = epoxyqueuosine(34) in tRNA + adenine + L-methionine + 2 H(+). The protein operates within tRNA modification; tRNA-queuosine biosynthesis. In terms of biological role, transfers and isomerizes the ribose moiety from AdoMet to the 7-aminomethyl group of 7-deazaguanine (preQ1-tRNA) to give epoxyqueuosine (oQ-tRNA). The sequence is that of S-adenosylmethionine:tRNA ribosyltransferase-isomerase from Pectobacterium atrosepticum (strain SCRI 1043 / ATCC BAA-672) (Erwinia carotovora subsp. atroseptica).